Consider the following 499-residue polypeptide: Serine/threonine protein phosphatase 2A 57 kDa regulatory subunit B' beta isoform (499 aa).

A compositionally biased stretch (basic residues) spans 1–13 (MFKKIMKGGHRKP). The segment at 1–65 (MFKKIMKGGH…PVTATPPPPP (65 aa)) is disordered.

It belongs to the phosphatase 2A regulatory subunit B56 family. As to quaternary structure, PP2A consists of a common heteromeric enzyme, composed of a catalytic subunit (subunits C), a constant regulatory subunit (subunit A), and a variety of regulatory subunits such as subunits B (the R2/B/PR55/B55, R3/B''/PR72/PR130/PR59 and R5/B'/B56 families). Interacts with BZR1. Interacts with BRI1. Interacts with SRK2E/OST1. In terms of tissue distribution, expressed ubiquitously, higher levels in cotyledons and flowers.

The protein resides in the nucleus. The protein localises to the cytoplasm. Functionally, the B regulatory subunit may modulate substrate selectivity and catalytic activity, and may also direct the localization of the catalytic enzyme to a particular subcellular compartment. Required for the formation of the PP2A holoenzyme that positively regulates brassinosteroid signaling by dephosphorylating and activating BZR1. The chain is Serine/threonine protein phosphatase 2A 57 kDa regulatory subunit B' beta isoform (B'BETA) from Arabidopsis thaliana (Mouse-ear cress).